The primary structure comprises 514 residues: MPPLALLSTSDKTGVVEFARSLVNEFGFQLISSGGTAKALIAAGLPVTKVADYTGSPEILGGRVKTLHPRIHGGILARRDLPTDLQDLAATGIEPIDLVVVNLYPFEQTIAQPDMTLSDAIEQIDIGGPALLRASAKNFAHVTVLCSPEQYGPCLAELRQQQGQTSLIFRQSCAQKAFWHTATYDQAIATYLTSSDPTEISLPPRLSVTATQFQSLRYGENPHQAAAWYRTGTATGGWSGATQLQGKELSYNNLVDLEAARAIVAEFTEQPAAVITKHTNPCGVAEGDSLVEAYRRAFQADSTSAFGGIVALNHPLDGETAKAMTETFLECIVAPGCEPEAEAILKTKSNLRVLVLPDLSQGASLEIKAIAGGFLVQQPDRQPIQPQSWEVVSQTKPTEEQWQELIFAWKVAKHVKSNAIVVTADRVTLGVGAGQMNRVGSVQIALTQAGEKAQGAVLASDGFFPFDDSVRAAAAAGIGAIVQPGGSKRDADSIQAADQLGLVMVFTHTRHFLH.

In terms of domain architecture, MGS-like spans 1–146 (MPPLALLSTS…KNFAHVTVLC (146 aa)).

It belongs to the PurH family.

The catalysed reaction is (6R)-10-formyltetrahydrofolate + 5-amino-1-(5-phospho-beta-D-ribosyl)imidazole-4-carboxamide = 5-formamido-1-(5-phospho-D-ribosyl)imidazole-4-carboxamide + (6S)-5,6,7,8-tetrahydrofolate. The enzyme catalyses IMP + H2O = 5-formamido-1-(5-phospho-D-ribosyl)imidazole-4-carboxamide. It functions in the pathway purine metabolism; IMP biosynthesis via de novo pathway; 5-formamido-1-(5-phospho-D-ribosyl)imidazole-4-carboxamide from 5-amino-1-(5-phospho-D-ribosyl)imidazole-4-carboxamide (10-formyl THF route): step 1/1. Its pathway is purine metabolism; IMP biosynthesis via de novo pathway; IMP from 5-formamido-1-(5-phospho-D-ribosyl)imidazole-4-carboxamide: step 1/1. In Cyanothece sp. (strain PCC 7425 / ATCC 29141), this protein is Bifunctional purine biosynthesis protein PurH.